The primary structure comprises 249 residues: MRVKIVSKPTSQLNNIIEKIKNISTKLGFEVVDKDFDYVIAVGGDGTLLRAVKQNKPVIAVKAGRRGLLMDVPVDKFEEALLRLKKGDYEEEEYMLLEMIYNDKVELGFNEVGILYDRPEAIKVGISFDTERVSVEGDGVLVSTPQGSSGWGMSATNSLLYKDLSAIEIIFVNPIFYYLRSVVIPPKPLTLRLEDKGYPQTARAVVDGEVVTLIKTNQEITVRVSQRKAKILRFFKLDLIGEVLHAYHI.

The active-site Proton acceptor is aspartate 45. NAD(+) is bound by residues 45–46, arginine 50, 110–111, aspartate 138, and 149–154; these read DG, NE, and SGWGMS.

The protein belongs to the NAD kinase family. Requires a divalent metal cation as cofactor.

The protein localises to the cytoplasm. The catalysed reaction is NAD(+) + ATP = ADP + NADP(+) + H(+). Functionally, involved in the regulation of the intracellular balance of NAD and NADP, and is a key enzyme in the biosynthesis of NADP. Catalyzes specifically the phosphorylation on 2'-hydroxyl of the adenosine moiety of NAD to yield NADP. The polypeptide is NAD kinase (Saccharolobus islandicus (strain Y.N.15.51 / Yellowstone #2) (Sulfolobus islandicus)).